The sequence spans 2604 residues: BEACH domain-containing protein B (2604 aa).

Residues 1761 to 1912 (VGTSEVLTSV…NAKEVGMLIV (152 aa)) form the BEACH-type PH domain. The region spanning 1936-2226 (DRRIAMEMAE…QIFRKKHPRR (291 aa)) is the BEACH domain. 6 WD repeats span residues 2254–2293 (HSPS…SGGN), 2368–2407 (HHKD…TPEK), 2433–2474 (GHDD…RSLK), 2476–2515 (PSGS…LASS), 2516–2557 (ESNG…KRYN), and 2558–2596 (GAGK…HRKP).

May be involved in the suppression of BCHC1 activity. This is BEACH domain-containing protein B from Arabidopsis thaliana (Mouse-ear cress).